Reading from the N-terminus, the 211-residue chain is Adenylyl-sulfate kinase (211 aa).

32-39 (GLSASGKS) contacts ATP. S107 acts as the Phosphoserine intermediate in catalysis.

This sequence belongs to the APS kinase family. In terms of assembly, homodimer.

It carries out the reaction adenosine 5'-phosphosulfate + ATP = 3'-phosphoadenylyl sulfate + ADP + H(+). It participates in sulfur metabolism; hydrogen sulfide biosynthesis; sulfite from sulfate: step 2/3. Its function is as follows. Catalyzes the synthesis of activated sulfate. The sequence is that of Adenylyl-sulfate kinase from Penicillium chrysogenum (Penicillium notatum).